Reading from the N-terminus, the 344-residue chain is Uroporphyrinogen decarboxylase (344 aa).

Substrate-binding positions include 23-27, aspartate 73, tyrosine 149, threonine 204, and histidine 321; that span reads RQAGR.

It belongs to the uroporphyrinogen decarboxylase family. In terms of assembly, homodimer.

The protein resides in the cytoplasm. It catalyses the reaction uroporphyrinogen III + 4 H(+) = coproporphyrinogen III + 4 CO2. The protein operates within porphyrin-containing compound metabolism; protoporphyrin-IX biosynthesis; coproporphyrinogen-III from 5-aminolevulinate: step 4/4. Its function is as follows. Catalyzes the decarboxylation of four acetate groups of uroporphyrinogen-III to yield coproporphyrinogen-III. In Francisella tularensis subsp. mediasiatica (strain FSC147), this protein is Uroporphyrinogen decarboxylase.